Consider the following 641-residue polypeptide: 1-deoxy-D-xylulose-5-phosphate synthase (641 aa).

Residues His71 and 112-114 (SHA) contribute to the thiamine diphosphate site. Mg(2+) is bound at residue Asp144. Thiamine diphosphate-binding positions include 145–146 (GA), Asn173, Tyr284, and Glu365. Asn173 provides a ligand contact to Mg(2+).

This sequence belongs to the transketolase family. DXPS subfamily. As to quaternary structure, homodimer. Mg(2+) is required as a cofactor. The cofactor is thiamine diphosphate.

It catalyses the reaction D-glyceraldehyde 3-phosphate + pyruvate + H(+) = 1-deoxy-D-xylulose 5-phosphate + CO2. It functions in the pathway metabolic intermediate biosynthesis; 1-deoxy-D-xylulose 5-phosphate biosynthesis; 1-deoxy-D-xylulose 5-phosphate from D-glyceraldehyde 3-phosphate and pyruvate: step 1/1. Functionally, catalyzes the acyloin condensation reaction between C atoms 2 and 3 of pyruvate and glyceraldehyde 3-phosphate to yield 1-deoxy-D-xylulose-5-phosphate (DXP). The chain is 1-deoxy-D-xylulose-5-phosphate synthase from Mycolicibacterium paratuberculosis (strain ATCC BAA-968 / K-10) (Mycobacterium paratuberculosis).